A 376-amino-acid chain; its full sequence is Cyclin-dependent kinase 9-A (376 aa).

The 301-residue stretch at 19 to 319 (YERLAKIGQG…SDDALNNDFF (301 aa)) folds into the Protein kinase domain. ATP is bound by residues 25–33 (IGQGTFGEV) and Lys48. Asp153 functions as the Proton acceptor in the catalytic mechanism. The tract at residues 345–376 (PPRRRGGHMPQQPANQARNPAATNQSEFERVF) is disordered. A compositionally biased stretch (low complexity) spans 354–369 (PQQPANQARNPAATNQ).

This sequence belongs to the protein kinase superfamily. CMGC Ser/Thr protein kinase family. CDC2/CDKX subfamily. In terms of assembly, associates with cyclin-T to form P-TEFb.

Its subcellular location is the nucleus. It carries out the reaction L-seryl-[protein] + ATP = O-phospho-L-seryl-[protein] + ADP + H(+). It catalyses the reaction L-threonyl-[protein] + ATP = O-phospho-L-threonyl-[protein] + ADP + H(+). The catalysed reaction is [DNA-directed RNA polymerase] + ATP = phospho-[DNA-directed RNA polymerase] + ADP + H(+). Member of the cyclin-dependent kinase pair (CDK9/cyclin-T) complex, also called positive transcription elongation factor B (P-TEFb), which is proposed to facilitate the transition from abortive to production elongation by phosphorylating the CTD (C-terminal domain) of the large subunit of RNA polymerase II (RNAP II) and SUPT5H. This chain is Cyclin-dependent kinase 9-A (cdk9-a), found in Xenopus laevis (African clawed frog).